We begin with the raw amino-acid sequence, 1162 residues long: DNA-directed RNA polymerase subunit beta (1162 aa).

Belongs to the RNA polymerase beta chain family. As to quaternary structure, the RNAP catalytic core consists of 2 alpha, 1 beta, 1 beta' and 1 omega subunit. When a sigma factor is associated with the core the holoenzyme is formed, which can initiate transcription.

The catalysed reaction is RNA(n) + a ribonucleoside 5'-triphosphate = RNA(n+1) + diphosphate. DNA-dependent RNA polymerase catalyzes the transcription of DNA into RNA using the four ribonucleoside triphosphates as substrates. This Clavibacter michiganensis subsp. michiganensis (strain NCPPB 382) protein is DNA-directed RNA polymerase subunit beta.